Consider the following 456-residue polypeptide: Exodeoxyribonuclease 7 large subunit (456 aa).

This sequence belongs to the XseA family. In terms of assembly, heterooligomer composed of large and small subunits.

It is found in the cytoplasm. The catalysed reaction is Exonucleolytic cleavage in either 5'- to 3'- or 3'- to 5'-direction to yield nucleoside 5'-phosphates.. Functionally, bidirectionally degrades single-stranded DNA into large acid-insoluble oligonucleotides, which are then degraded further into small acid-soluble oligonucleotides. This Lactobacillus delbrueckii subsp. bulgaricus (strain ATCC BAA-365 / Lb-18) protein is Exodeoxyribonuclease 7 large subunit.